The primary structure comprises 512 residues: Na(+)/H(+) antiporter NhaB (512 aa).

11 consecutive transmembrane segments (helical) span residues Phe-28 to Val-48, Ile-52 to Ile-72, Leu-97 to Phe-117, Phe-144 to Ile-164, Leu-201 to Pro-221, Phe-237 to Phe-257, Leu-296 to Ala-330, Thr-347 to Ile-367, Leu-390 to Val-410, Ala-446 to Ile-466, and Val-474 to Phe-494.

This sequence belongs to the NhaB Na(+)/H(+) (TC 2.A.34) antiporter family.

It is found in the cell inner membrane. The catalysed reaction is 2 Na(+)(in) + 3 H(+)(out) = 2 Na(+)(out) + 3 H(+)(in). In terms of biological role, na(+)/H(+) antiporter that extrudes sodium in exchange for external protons. The polypeptide is Na(+)/H(+) antiporter NhaB (Enterobacter sp. (strain 638)).